Consider the following 286-residue polypeptide: 33 kDa chaperonin (286 aa).

2 disulfides stabilise this stretch: C236–C238 and C264–C267.

It belongs to the HSP33 family. Post-translationally, under oxidizing conditions two disulfide bonds are formed involving the reactive cysteines. Under reducing conditions zinc is bound to the reactive cysteines and the protein is inactive.

Its subcellular location is the cytoplasm. Functionally, redox regulated molecular chaperone. Protects both thermally unfolding and oxidatively damaged proteins from irreversible aggregation. Plays an important role in the bacterial defense system toward oxidative stress. The protein is 33 kDa chaperonin of Carboxydothermus hydrogenoformans (strain ATCC BAA-161 / DSM 6008 / Z-2901).